The following is a 358-amino-acid chain: DNA polymerase IV (358 aa).

The UmuC domain occupies 6-187; that stretch reads IIHIDMDYFF…LDIGDFPGVG (182 aa). Residues Asp10 and Asp105 each contribute to the Mg(2+) site. Glu106 is a catalytic residue.

It belongs to the DNA polymerase type-Y family. Monomer. Requires Mg(2+) as cofactor.

It is found in the cytoplasm. The enzyme catalyses DNA(n) + a 2'-deoxyribonucleoside 5'-triphosphate = DNA(n+1) + diphosphate. Functionally, poorly processive, error-prone DNA polymerase involved in untargeted mutagenesis. Copies undamaged DNA at stalled replication forks, which arise in vivo from mismatched or misaligned primer ends. These misaligned primers can be extended by PolIV. Exhibits no 3'-5' exonuclease (proofreading) activity. May be involved in translesional synthesis, in conjunction with the beta clamp from PolIII. This Staphylococcus haemolyticus (strain JCSC1435) protein is DNA polymerase IV.